We begin with the raw amino-acid sequence, 138 residues long: uncharacterized protein (138 aa).

This is an uncharacterized protein from Acanthamoeba polyphaga (Amoeba).